Here is a 98-residue protein sequence, read N- to C-terminus: NADH-ubiquinone oxidoreductase chain 4L (98 aa).

Helical transmembrane passes span 1–21, 29–49, and 61–81; these read MPPI…GLLM, SLLC…ILSL, and IILL…LVMI.

Belongs to the complex I subunit 4L family. In terms of assembly, core subunit of respiratory chain NADH dehydrogenase (Complex I) which is composed of 45 different subunits.

It localises to the mitochondrion inner membrane. The enzyme catalyses a ubiquinone + NADH + 5 H(+)(in) = a ubiquinol + NAD(+) + 4 H(+)(out). In terms of biological role, core subunit of the mitochondrial membrane respiratory chain NADH dehydrogenase (Complex I) which catalyzes electron transfer from NADH through the respiratory chain, using ubiquinone as an electron acceptor. Part of the enzyme membrane arm which is embedded in the lipid bilayer and involved in proton translocation. The sequence is that of NADH-ubiquinone oxidoreductase chain 4L (MT-ND4L) from Galeopterus variegatus (Malayan flying lemur).